The following is a 547-amino-acid chain: Glucose-6-phosphate isomerase (547 aa).

Glutamate 351 (proton donor) is an active-site residue. Residues histidine 382 and lysine 509 contribute to the active site.

Belongs to the GPI family.

It is found in the cytoplasm. The catalysed reaction is alpha-D-glucose 6-phosphate = beta-D-fructose 6-phosphate. It participates in carbohydrate biosynthesis; gluconeogenesis. Its pathway is carbohydrate degradation; glycolysis; D-glyceraldehyde 3-phosphate and glycerone phosphate from D-glucose: step 2/4. Its function is as follows. Catalyzes the reversible isomerization of glucose-6-phosphate to fructose-6-phosphate. The protein is Glucose-6-phosphate isomerase of Coxiella burnetii (strain CbuK_Q154) (Coxiella burnetii (strain Q154)).